The sequence spans 454 residues: Ribosomal protein uS12 methylthiotransferase RimO (454 aa).

In terms of domain architecture, MTTase N-terminal spans 14-125 (SKVAFSHVGC…IAKVLDRVEK (112 aa)). The [4Fe-4S] cluster site is built by cysteine 23, cysteine 59, cysteine 88, cysteine 163, cysteine 167, and cysteine 170. One can recognise a Radical SAM core domain in the interval 149-378 (DKNKFVAYLR…ISVQQNISKD (230 aa)). The TRAM domain occupies 381–452 (QSYVGSKMKI…EYDLYGETLK (72 aa)).

It belongs to the methylthiotransferase family. RimO subfamily. Requires [4Fe-4S] cluster as cofactor.

Its subcellular location is the cytoplasm. The catalysed reaction is L-aspartate(89)-[ribosomal protein uS12]-hydrogen + (sulfur carrier)-SH + AH2 + 2 S-adenosyl-L-methionine = 3-methylsulfanyl-L-aspartate(89)-[ribosomal protein uS12]-hydrogen + (sulfur carrier)-H + 5'-deoxyadenosine + L-methionine + A + S-adenosyl-L-homocysteine + 2 H(+). Functionally, catalyzes the methylthiolation of an aspartic acid residue of ribosomal protein uS12. The chain is Ribosomal protein uS12 methylthiotransferase RimO from Prochlorococcus marinus (strain MIT 9215).